Consider the following 50-residue polypeptide: Large ribosomal subunit protein bL33 (50 aa).

It belongs to the bacterial ribosomal protein bL33 family.

The sequence is that of Large ribosomal subunit protein bL33 from Mycoplasmopsis synoviae (strain 53) (Mycoplasma synoviae).